The following is a 156-amino-acid chain: 6,7-dimethyl-8-ribityllumazine synthase (156 aa).

5-amino-6-(D-ribitylamino)uracil contacts are provided by residues phenylalanine 22, 57 to 59 (AYE), and 81 to 83 (TVI). 86–87 (GT) provides a ligand contact to (2S)-2-hydroxy-3-oxobutyl phosphate. Catalysis depends on histidine 89, which acts as the Proton donor. Residue phenylalanine 114 participates in 5-amino-6-(D-ribitylamino)uracil binding. Arginine 128 contributes to the (2S)-2-hydroxy-3-oxobutyl phosphate binding site.

It belongs to the DMRL synthase family. Forms an icosahedral capsid composed of 60 subunits, arranged as a dodecamer of pentamers.

It catalyses the reaction (2S)-2-hydroxy-3-oxobutyl phosphate + 5-amino-6-(D-ribitylamino)uracil = 6,7-dimethyl-8-(1-D-ribityl)lumazine + phosphate + 2 H2O + H(+). It participates in cofactor biosynthesis; riboflavin biosynthesis; riboflavin from 2-hydroxy-3-oxobutyl phosphate and 5-amino-6-(D-ribitylamino)uracil: step 1/2. Its function is as follows. Catalyzes the formation of 6,7-dimethyl-8-ribityllumazine by condensation of 5-amino-6-(D-ribitylamino)uracil with 3,4-dihydroxy-2-butanone 4-phosphate. This is the penultimate step in the biosynthesis of riboflavin. The protein is 6,7-dimethyl-8-ribityllumazine synthase of Salmonella agona (strain SL483).